Consider the following 394-residue polypeptide: Elongation factor Tu (394 aa).

The region spanning 10–205 (KPHMNVGTIG…SMDNYFDLPE (196 aa)) is the tr-type G domain. A G1 region spans residues 19-26 (GHVDHGKT). Position 19-26 (19-26 (GHVDHGKT)) interacts with GTP. Position 26 (Thr-26) interacts with Mg(2+). The tract at residues 61-65 (GITIN) is G2. The tract at residues 82–85 (DCPG) is G3. GTP-binding positions include 82–86 (DCPGH) and 137–140 (NKLD). The G4 stretch occupies residues 137–140 (NKLD). The segment at 173-175 (SAF) is G5.

Belongs to the TRAFAC class translation factor GTPase superfamily. Classic translation factor GTPase family. EF-Tu/EF-1A subfamily. In terms of assembly, monomer.

The protein localises to the cytoplasm. The enzyme catalyses GTP + H2O = GDP + phosphate + H(+). Functionally, GTP hydrolase that promotes the GTP-dependent binding of aminoacyl-tRNA to the A-site of ribosomes during protein biosynthesis. The polypeptide is Elongation factor Tu (Borreliella afzelii (strain PKo) (Borrelia afzelii)).